A 210-amino-acid polypeptide reads, in one-letter code: T-cell antigen CD7 (210 aa).

The first 23 residues, 1 to 23, serve as a signal peptide directing secretion; sequence MTQQAVLALLLTLAGILPGPLDA. One can recognise an Ig-like domain in the interval 24–129; it reads QDVHQSPRLT…RGLFTTVVVK (106 aa). Residues 24-150 lie on the Extracellular side of the membrane; the sequence is QDVHQSPRLT…EPLQTSFSFP (127 aa). Asn42, Asn86, and Asn93 each carry an N-linked (GlcNAc...) asparagine glycan. A disulfide bond links Cys45 and Cys111. The helical transmembrane segment at 151 to 171 threads the bilayer; it reads AAIAVGFFFTGLLLGVVCSML. A lipid anchor (S-palmitoyl cysteine) is attached at Cys168. At 172-210 the chain is on the cytoplasmic side; sequence RKIQIKKLCASGIKESPCVVYEDMSYSNRKTPCIPNQYQ.

As to quaternary structure, interacts with SECTM1.

Its subcellular location is the membrane. Transmembrane glycoprotein expressed by T-cells and natural killer (NK) cells and their precursors. Plays a costimulatory role in T-cell activation upon binding to its ligand K12/SECTM1. In turn, mediates the production of cytokines such as IL-2. On resting NK-cells, CD7 activation results in a significant induction of gamma-interferon levels. This is T-cell antigen CD7 (Cd7) from Mus musculus (Mouse).